We begin with the raw amino-acid sequence, 803 residues long: MAEAHQAVGFRPSLTSDGAEVELSAPVLQEIYLSGLRSWKRHLSRFWNDFLTGVFPASPLSWLFLFSAIQLAWFLQLDPSLGLMEKIKELLPDWGGQHHGLRGVLAAALFASCLWGALIFTLHVALRLLLSYHGWLLEPHGAMSSPTKTWLALVRIFSGRHPMLFSYQRSLPRQPVPSVQDTVRKYLESVRPILSDEDFDWTAVLAQEFLRLQASLLQWYLRLKSWWASNYVSDWWEEFVYLRSRNPLMVNSNYYMMDFLYVTPTPLQAARAGNAVHALLLYRHRLNRQEIPPTLLMGMRPLCSAQYEKIFNTTRIPGVQKDYIRHLHDSQHVAVFHRGRFFRMGTHSRNSLLSPRALEQQFQRILDDPSPACPHEEHLAALTAAPRGTWAQVRTSLKTQAAEALEAVEGAAFFVSLDAEPAGLTREDPAASLDAYAHALLAGRGHDRWFDKSFTLIVFSNGKLGLSVEHSWADCPISGHMWEFTLATECFQLGYSTDGHCKGHPDPTLPQPQRLQWDLPDQIHSSISLALRGAKILSENVDCHVVPFSLFGKSFIRRCHLSSDSFIQIALQLAHFRDRGQFCLTYESAMTRLFLEGRTETVRSCTREACNFVRAMEDKEKTDPQCLALFRVAVDKHQALLKAAMSGQGVDRHLFALYIVSRFLHLQSPFLTQVHSEQWQLSTSQIPVQQMHLFDVHNYPDYVSSGGGFGPADDHGYGVSYIFMGDGMITFHISSKKSSTKTDSHRLGQHIEDALLDVASLFQAGQHFKRRFRGSGKENSRHRCGFLSRQTGASKASMTSTDF.

The Cytoplasmic portion of the chain corresponds to 1 to 52 (MAEAHQAVGFRPSLTSDGAEVELSAPVLQEIYLSGLRSWKRHLSRFWNDFLT). The helical transmembrane segment at 53 to 75 (GVFPASPLSWLFLFSAIQLAWFL) threads the bilayer. Residues 76-103 (QLDPSLGLMEKIKELLPDWGGQHHGLRG) are Lumenal-facing. The helical transmembrane segment at 104 to 126 (VLAAALFASCLWGALIFTLHVAL) threads the bilayer. The Cytoplasmic segment spans residues 127-803 (RLLLSYHGWL…SKASMTSTDF (677 aa)). Catalysis depends on His470, which acts as the Proton acceptor. 552-564 (GKSFIRRCHLSSD) contributes to the CoA binding site. (R)-carnitine is bound by residues Tyr586, Ser588, and Thr599. The interval 761–803 (LFQAGQHFKRRFRGSGKENSRHRCGFLSRQTGASKASMTSTDF) is required for interaction with GRIA1. The disordered stretch occupies residues 772–803 (FRGSGKENSRHRCGFLSRQTGASKASMTSTDF). A compositionally biased stretch (polar residues) spans 788-803 (SRQTGASKASMTSTDF).

The protein belongs to the carnitine/choline acetyltransferase family. Peripherally associated with AMPAR complex. AMPAR complex consists of an inner core made of 4 pore-forming GluA/GRIA proteins (GRIA1, GRIA2, GRIA3 and GRIA4) and 4 major auxiliary subunits arranged in a twofold symmetry. One of the two pairs of distinct binding sites is occupied either by CNIH2, CNIH3 or CACNG2, CACNG3. The other harbors CACNG2, CACNG3, CACNG4, CACNG8 or GSG1L. This inner core of AMPAR complex is complemented by outer core constituents binding directly to the GluA/GRIA proteins at sites distinct from the interaction sites of the inner core constituents. Outer core constituents include at least PRRT1, PRRT2, CKAMP44/SHISA9, FRRS1L and NRN1. The proteins of the inner and outer core serve as a platform for other, more peripherally associated AMPAR constituents, including CPT1C. Alone or in combination, these auxiliary subunits control the gating and pharmacology of the AMPAR complex and profoundly impact their biogenesis and protein processing. Interacts with SACM1L; the interaction regulates SACM1L phosphatidylinositol-3-phosphatase activity and translocation to endoplasmic reticulum/trans Golgi network in a malonyl-CoA dependent manner. Interacts with ATL1. As to expression, expressed predominantly in brain and testis. Expressed in motor neurons.

Its subcellular location is the cell projection. The protein resides in the dendrite. It is found in the axon. It localises to the endoplasmic reticulum membrane. The catalysed reaction is S-hexadecanoyl-L-cysteinyl-[protein] + H2O = L-cysteinyl-[protein] + hexadecanoate + H(+). In terms of biological role, palmitoyl thioesterase specifically expressed in the endoplasmic reticulum of neurons. Modulates the trafficking of the glutamate receptor, AMPAR, to plasma membrane through depalmitoylation of GRIA1. Also regulates AMPR trafficking through the regulation of SACM1L phosphatidylinositol-3-phosphatase activity by interaction in a malonyl-CoA dependent manner. Binds malonyl-CoA and couples malonyl-CoA to ceramide levels, necessary for proper spine maturation and contributing to systemic energy homeostasis and appetite control. Binds to palmitoyl-CoA, but does not have carnitine palmitoyltransferase 1 catalytic activity or at very low levels. This chain is Palmitoyl thioesterase CPT1C, found in Homo sapiens (Human).